The following is a 553-amino-acid chain: Coiled-coil domain-containing protein 85A (553 aa).

The span at 1-28 (MSKAAGGAAAAAAAAESCSPAPAGSSAA) shows a compositional bias: low complexity. The tract at residues 1 to 37 (MSKAAGGAAAAAAAAESCSPAPAGSSAAPPAPVEDLS) is disordered. Coiled coils occupy residues 43-109 (ELLQ…RDLC) and 137-169 (MHKEVALYLQKLKDLEVKQEEVVKENMELKELC). 3 disordered regions span residues 203–414 (YVRD…GMNE), 433–461 (ENRMLPQASQNRRQPPTRNSSNMEKGWGS), and 491–518 (SGADGSNSSPNSAASFSGHATPSQQPEP). Residues 209–220 (DGSSTSSTGSTD) show a composition bias toward low complexity. Residues 236-260 (HLQKPRSEGSPEHSKHRSASPEHPQ) are compositionally biased toward basic and acidic residues. Gly residues predominate over residues 376 to 389 (GGSGGSGGSGGGSR). Over residues 391 to 403 (GTLRRQAQEDGSP) the composition is skewed to basic and acidic residues. Residues 412-443 (MNESTLSYVRQLEARVRQLEEENRMLPQASQN) are a coiled coil. Residues 439 to 455 (QASQNRRQPPTRNSSNM) show a composition bias toward polar residues. Over residues 491-508 (SGADGSNSSPNSAASFSG) the composition is skewed to low complexity. At R541 the chain carries Asymmetric dimethylarginine.

It belongs to the CCDC85 family. As to quaternary structure, may interact with ARVCF; CTNND1; CTNND2 and PKP4.

The protein resides in the cell junction. The protein localises to the adherens junction. May play a role in cell-cell adhesion and epithelium development through its interaction with proteins of the beta-catenin family. This chain is Coiled-coil domain-containing protein 85A (CCDC85A), found in Homo sapiens (Human).